The following is a 260-amino-acid chain: Homeobox protein CDX-1 (260 aa).

The homeobox DNA-binding region spans 149–208 (KDKYRVVYTDHQRLELEKEFHYSRYITIRRKAELAAALGLTERQVKIWFQNRRAKERKVN). The tract at residues 152-173 (YRVVYTDHQRLELEKEFHYSRY) is interaction with DNA. Residues 191-202 (RQVKIWFQNRRA) form an interaction with 5-mCpG DNA region. Residues 204–260 (ERKVNKKKLQQQSQPTSTTTPTPPAVGTPGPMGTLCSGSAPSLVSSSPLTIKEEFMP) are disordered. Low complexity-rich tracts occupy residues 213 to 223 (QQQSQPTSTTT) and 240 to 252 (SGSA…SSPL).

The protein belongs to the Caudal homeobox family.

It is found in the nucleus. Plays a role in transcriptional regulation. Involved in activated KRAS-mediated transcriptional activation of PRKD1. Binds to the PRKD1 promoter. Could play a role in the terminal differentiation of the intestine. Binds preferentially to methylated DNA. The sequence is that of Homeobox protein CDX-1 (CDX1) from Gallus gallus (Chicken).